We begin with the raw amino-acid sequence, 166 residues long: Putative signal peptidase complex catalytic subunit SEC11B (166 aa).

Residues 1–6 (MNKWRL) are Cytoplasmic-facing. A helical; Signal-anchor for type II membrane protein membrane pass occupies residues 7–24 (YYQVLNFGMIVSSALMIW). Residues 25–166 (KGLMVITGSE…LGLFVLVHRE (142 aa)) are Extracellular-facing. The active site involves Ser43.

The protein belongs to the peptidase S26B family.

The protein resides in the membrane. It carries out the reaction Cleavage of hydrophobic, N-terminal signal or leader sequences from secreted and periplasmic proteins.. Putative component of some signal peptidase complex which removes signal peptides from nascent proteins as they are translocated into the lumen of the endoplasmic reticulum. This Homo sapiens (Human) protein is Putative signal peptidase complex catalytic subunit SEC11B (SEC11B).